Here is a 230-residue protein sequence, read N- to C-terminus: Pyridoxine/pyridoxamine 5'-phosphate oxidase (230 aa).

Substrate is bound by residues 21-24 and Lys87; that span reads RVEY. FMN-binding positions include 82–87, 97–98, Lys104, and Gln126; these read RSVLCK and YT. Residues Tyr144, Arg148, and Ser152 each contribute to the substrate site. FMN is bound by residues 161 to 162 and Trp207; that span reads QS. 213-215 contributes to the substrate binding site; sequence RVH. Arg217 contacts FMN.

Belongs to the pyridoxamine 5'-phosphate oxidase family. In terms of assembly, homodimer. Requires FMN as cofactor.

It carries out the reaction pyridoxamine 5'-phosphate + O2 + H2O = pyridoxal 5'-phosphate + H2O2 + NH4(+). It catalyses the reaction pyridoxine 5'-phosphate + O2 = pyridoxal 5'-phosphate + H2O2. Its pathway is cofactor metabolism; pyridoxal 5'-phosphate salvage; pyridoxal 5'-phosphate from pyridoxamine 5'-phosphate: step 1/1. It functions in the pathway cofactor metabolism; pyridoxal 5'-phosphate salvage; pyridoxal 5'-phosphate from pyridoxine 5'-phosphate: step 1/1. Catalyzes the oxidation of either pyridoxine 5'-phosphate (PNP) or pyridoxamine 5'-phosphate (PMP) into pyridoxal 5'-phosphate (PLP). The protein is Pyridoxine/pyridoxamine 5'-phosphate oxidase of Mycolicibacterium smegmatis (strain ATCC 700084 / mc(2)155) (Mycobacterium smegmatis).